The chain runs to 223 residues: Ribonuclease T (223 aa).

Acidic residues predominate over residues 1–11 (MSDDHFDDEQE). The tract at residues 1–21 (MSDDHFDDEQEGSSGGPRHPM) is disordered. The region spanning 31–205 (VVVDVETGGF…YDTEKTAELF (175 aa)) is the Exonuclease domain. Mg(2+) is bound by residues Asp34, Glu36, His192, and Asp197. Residue His192 is the Proton donor/acceptor of the active site.

It belongs to the RNase T family. Homodimer. It depends on Mg(2+) as a cofactor.

Its function is as follows. Trims short 3' overhangs of a variety of RNA species, leaving a one or two nucleotide 3' overhang. Responsible for the end-turnover of tRNA: specifically removes the terminal AMP residue from uncharged tRNA (tRNA-C-C-A). Also appears to be involved in tRNA biosynthesis. The sequence is that of Ribonuclease T from Pseudomonas fluorescens (strain ATCC BAA-477 / NRRL B-23932 / Pf-5).